Here is a 440-residue protein sequence, read N- to C-terminus: ATP-dependent protease ATPase subunit HslU (440 aa).

Residues valine 18, 60–65 (GVGKTE), aspartate 254, glutamate 319, and arginine 391 contribute to the ATP site.

The protein belongs to the ClpX chaperone family. HslU subfamily. As to quaternary structure, a double ring-shaped homohexamer of HslV is capped on each side by a ring-shaped HslU homohexamer. The assembly of the HslU/HslV complex is dependent on binding of ATP.

The protein localises to the cytoplasm. Functionally, ATPase subunit of a proteasome-like degradation complex; this subunit has chaperone activity. The binding of ATP and its subsequent hydrolysis by HslU are essential for unfolding of protein substrates subsequently hydrolyzed by HslV. HslU recognizes the N-terminal part of its protein substrates and unfolds these before they are guided to HslV for hydrolysis. The sequence is that of ATP-dependent protease ATPase subunit HslU from Cellvibrio japonicus (strain Ueda107) (Pseudomonas fluorescens subsp. cellulosa).